A 276-amino-acid polypeptide reads, in one-letter code: Undecaprenyl-diphosphatase 1 (276 aa).

Transmembrane regions (helical) follow at residues 4 to 24, 45 to 62, 83 to 103, 108 to 128, 187 to 207, 217 to 237, and 252 to 272; these read ILIC…FLPV, KTFD…VCWE, FTLN…LFEK, VLFS…IILW, VATE…TLYE, VDSL…AFVC, and VFAW…YSGW.

The protein belongs to the UppP family.

The protein resides in the cell inner membrane. It catalyses the reaction di-trans,octa-cis-undecaprenyl diphosphate + H2O = di-trans,octa-cis-undecaprenyl phosphate + phosphate + H(+). Functionally, catalyzes the dephosphorylation of undecaprenyl diphosphate (UPP). Confers resistance to bacitracin. The chain is Undecaprenyl-diphosphatase 1 from Burkholderia ambifaria (strain ATCC BAA-244 / DSM 16087 / CCUG 44356 / LMG 19182 / AMMD) (Burkholderia cepacia (strain AMMD)).